Reading from the N-terminus, the 441-residue chain is Amino-acid acetyltransferase (441 aa).

In terms of domain architecture, N-acetyltransferase spans 295–434 (EQVRRATIND…QELYNYQRRS (140 aa)).

Belongs to the acetyltransferase family. ArgA subfamily. As to quaternary structure, homohexamer.

Its subcellular location is the cytoplasm. It catalyses the reaction L-glutamate + acetyl-CoA = N-acetyl-L-glutamate + CoA + H(+). It functions in the pathway amino-acid biosynthesis; L-arginine biosynthesis; N(2)-acetyl-L-ornithine from L-glutamate: step 1/4. This Yersinia enterocolitica serotype O:8 / biotype 1B (strain NCTC 13174 / 8081) protein is Amino-acid acetyltransferase.